A 346-amino-acid chain; its full sequence is LRP2-binding protein (346 aa).

The TPR repeat unit spans residues 58 to 91; it reads AMAYFLRGQLYFEEGWYEEALAQFEEIQEKDHQA. Sel1-like repeat units lie at residues 92–124, 132–167, 172–205, 206–241, 242–276, and 296–331; these read IYQLGVMYYDGLGTVADAEKGVGYMKKILDSSC, FAAAYNLGRAYFEGKGVKRSDEEAERLWLYAADNGN, VKAQSILGLFYSMKEPKDLEKAFFWHSEACGNGN, LESQGALGLMYLYGQGIRQDTDAALHCLREAAERGN, VYAQGILVEYYYKMKFFTKCVSFSKRIADYDEVHD, and AMASFYYARCLQLGLGITKDEASAKHYYSKACRLNP.

Interacts with LRP2.

It is found in the cytoplasm. In terms of biological role, may act as an adapter that regulates LRP2 function. This is LRP2-binding protein (Lrp2bp) from Rattus norvegicus (Rat).